A 115-amino-acid polypeptide reads, in one-letter code: C-C motif chemokine 6 (115 aa).

The signal sequence occupies residues M1–A21. 3 disulfide bridges follow: C49-C72, C50-C88, and C59-C99.

This sequence belongs to the intercrine beta (chemokine CC) family.

Its subcellular location is the secreted. The sequence is that of C-C motif chemokine 6 (Ccl6) from Rattus norvegicus (Rat).